Reading from the N-terminus, the 206-residue chain is Small ribosomal subunit protein uS4 (206 aa).

Positions Asn18 to Ser46 are disordered. An S4 RNA-binding domain is found at Arg94 to Leu154.

The protein belongs to the universal ribosomal protein uS4 family. Part of the 30S ribosomal subunit. Contacts protein S5. The interaction surface between S4 and S5 is involved in control of translational fidelity.

One of the primary rRNA binding proteins, it binds directly to 16S rRNA where it nucleates assembly of the body of the 30S subunit. Functionally, with S5 and S12 plays an important role in translational accuracy. The sequence is that of Small ribosomal subunit protein uS4 from Dinoroseobacter shibae (strain DSM 16493 / NCIMB 14021 / DFL 12).